The primary structure comprises 492 residues: Catalase isozyme 2 (492 aa).

Residues H65 and N138 contribute to the active site. A heme-binding site is contributed by Y348.

This sequence belongs to the catalase family. As to quaternary structure, homotetramer. It depends on heme as a cofactor.

It localises to the peroxisome. The catalysed reaction is 2 H2O2 = O2 + 2 H2O. Occurs in almost all aerobically respiring organisms and serves to protect cells from the toxic effects of hydrogen peroxide. The sequence is that of Catalase isozyme 2 (CAT2) from Gossypium hirsutum (Upland cotton).